A 273-amino-acid polypeptide reads, in one-letter code: Putative peptidyl-prolyl cis-trans isomerase Cbf2 (273 aa).

The N-terminal stretch at 1–21 is a signal peptide; sequence MKKFSLVAAALIAGVALNVNA. In terms of domain architecture, PpiC spans 131-228; sequence PARVQAKHIL…FGYHVILKEN (98 aa).

It catalyses the reaction [protein]-peptidylproline (omega=180) = [protein]-peptidylproline (omega=0). In Campylobacter jejuni subsp. jejuni serotype O:23/36 (strain 81-176), this protein is Putative peptidyl-prolyl cis-trans isomerase Cbf2 (cbf2).